Here is a 488-residue protein sequence, read N- to C-terminus: 3-octaprenyl-4-hydroxybenzoate carboxy-lyase (488 aa).

Position 172 (N172) interacts with Mn(2+). Residues 175 to 177 (IYR), 189 to 191 (RWL), and 194 to 195 (RG) contribute to the prenylated FMN site. Position 238 (E238) interacts with Mn(2+). D287 (proton donor) is an active-site residue.

Belongs to the UbiD family. Homohexamer. The cofactor is prenylated FMN. Requires Mn(2+) as cofactor.

The protein localises to the cell membrane. It carries out the reaction a 4-hydroxy-3-(all-trans-polyprenyl)benzoate + H(+) = a 2-(all-trans-polyprenyl)phenol + CO2. It participates in cofactor biosynthesis; ubiquinone biosynthesis. Its function is as follows. Catalyzes the decarboxylation of 3-octaprenyl-4-hydroxy benzoate to 2-octaprenylphenol, an intermediate step in ubiquinone biosynthesis. The protein is 3-octaprenyl-4-hydroxybenzoate carboxy-lyase of Alteromonas mediterranea (strain DSM 17117 / CIP 110805 / LMG 28347 / Deep ecotype).